The following is a 54-amino-acid chain: Large ribosomal subunit protein bL32c (54 aa).

Belongs to the bacterial ribosomal protein bL32 family.

The protein localises to the plastid. The protein resides in the chloroplast. The chain is Large ribosomal subunit protein bL32c from Gossypium barbadense (Sea Island cotton).